The chain runs to 158 residues: Ribosome maturation factor RimP (158 aa).

This sequence belongs to the RimP family.

The protein localises to the cytoplasm. In terms of biological role, required for maturation of 30S ribosomal subunits. This is Ribosome maturation factor RimP from Lactiplantibacillus plantarum (strain ATCC BAA-793 / NCIMB 8826 / WCFS1) (Lactobacillus plantarum).